Consider the following 613-residue polypeptide: RNA polymerase-associated protein RTF1 homolog (613 aa).

2 disordered regions span residues 1 to 90 (MSSS…DKAR) and 121 to 247 (QQLA…KDKI). The span at 55 to 68 (PAKKKTLTKRKRRA) shows a compositional bias: basic residues. The segment covering 72-81 (SDDDQVDDDL) has biased composition (acidic residues). Basic and acidic residues predominate over residues 167–176 (AAFHRPSDIN). The stretch at 175 to 209 (INRKHKEKNAMDALKNKRKEIEKKNAKNEALSIDA) forms a coiled coil. A compositionally biased stretch (low complexity) spans 215-235 (SGSSSSSSSSESSRSSSSSRE). The segment covering 236–247 (SSPERVSEKDKI) has biased composition (basic and acidic residues). Positions 252–383 (VDGLSELRRA…KKQDIEKAIN (132 aa)) constitute a Plus3 domain. Residues 425–462 (RGDIREAEQIQTKIDEIERQADELEKERSKSISAIAFI) adopt a coiled-coil conformation. Disordered regions lie at residues 485–549 (SQDD…KTDI) and 564–613 (LKDF…SSAV). Over residues 510-521 (TLSASSSTTNLS) the composition is skewed to low complexity. Residues 569–586 (TPESSGNKRPSISSSKGV) show a composition bias toward polar residues. The span at 602–613 (GSSTSAAPSSAV) shows a compositional bias: low complexity.

As to quaternary structure, component of the PAF1 complex which consists of at least cdc-73, ctr-9, leo-1, pafo-1 and rtfo-1.

The protein localises to the nucleus. Component of the PAF1 complex which is a multifunctional complex involved in transcription initiation via genetic interactions with TATA-binding proteins, elongation and transcription-coupled histone modification. In Caenorhabditis elegans, this protein is RNA polymerase-associated protein RTF1 homolog.